Here is a 314-residue protein sequence, read N- to C-terminus: Probable cell division protein WhiA (314 aa).

Positions 274-308 (SLKELGEMISTGPISKSGVNHRLRKLNELADKIRS) form a DNA-binding region, H-T-H motif.

Belongs to the WhiA family.

In terms of biological role, involved in cell division and chromosome segregation. This chain is Probable cell division protein WhiA, found in Staphylococcus haemolyticus (strain JCSC1435).